Consider the following 47-residue polypeptide: Mu-theraphotoxin-An1a (47 aa).

3 cysteine pairs are disulfide-bonded: cysteine 4/cysteine 34, cysteine 8/cysteine 39, and cysteine 22/cysteine 44.

Post-translationally, contains 3 disulfide bonds. As to expression, expressed by the venom gland.

The protein localises to the secreted. Its function is as follows. Is toxic to insects. Reduces amplitude and frequency of spontaneous firing and inhibits voltage-gated sodium current (Nav) in the dorsal unpaired median (DUM) neurons of P.americana. This is Mu-theraphotoxin-An1a from Acanthoscurria natalensis (Tarantula spider).